Reading from the N-terminus, the 597-residue chain is Nuclear receptor subfamily 4 group A member 1 (597 aa).

Residues 1–22 (MPCIQAQYGTPATSPGPRDHLT) form a disordered region. Positions 170-465 (RVWTEQLPKA…PGEGKLIFCS (296 aa)) are required for nuclear import. Positions 263–338 (EGRCAVCGDN…VGMVKEVVRT (76 aa)) form a DNA-binding region, nuclear receptor. NR C4-type zinc fingers lie at residues 266 to 286 (CAVC…CEGC) and 302 to 326 (CLAN…FQKC). Residues 267 to 353 (AVCGDNASCQ…RRGRLPSKPK (87 aa)) are required for binding NBRE-containing DNA. The tract at residues 298–360 (AKYICLANKD…KPKQPPDASP (63 aa)) is required for the interaction with RXRA. Phosphoserine; by PKA is present on S340. Residues 341–360 (LKGRRGRLPSKPKQPPDASP) are disordered. Position 350 is a phosphoserine; by PKA, RPS6KA1 and RPS6KA3 (S350). One can recognise an NR LBD domain in the interval 359 to 594 (SPTNLLTSLI…PIVDKIFMDT (236 aa)). The binds lipopolysaccharide stretch occupies residues 520-543 (PRRVEELQNRIASCLKEHMAAVAG). Residues 583 to 594 (PPPIVDKIFMDT) are AF-2.

Belongs to the nuclear hormone receptor family. NR4 subfamily. In terms of assembly, binds the NGFI-B response element (NBRE) as a monomer. Binds the Nur response element (NurRE), consisting of two inverse NBRE-related octanucleotide repeats separated by 6 base-pairs, as a dimer. Interacts (via N-terminus) with NLRP3 (via LRR repeat domain); the interaction is direct, requires binding of NR4A1/Nur77 to NBRE-containing dsDNA and lipopolysaccharide, and leads to non-canonical NLRP3 inflammasome activation. Interacts with GADD45GIP1. Interacts with STK11. Interacts with IFI27. Heterodimer (via DNA-binding domain) with RXRA (via C-terminus); DNA-binding of the heterodimer is enhanced by 9-cis retinoic acid. Competes for the RXRA interaction with EP300 and thereby attenuates EP300 mediated acetylation of RXRA. Interacts with NCOA1. Interacts with NCOA2. Interacts with NCOA3. It depends on Zn(2+) as a cofactor. In terms of processing, phosphorylated at Ser-350 by RPS6KA1 and RPS6KA3 in response to mitogenic or stress stimuli. Phosphorylation of Ser-350 results in decrease in NBRE binding while phosphorylation of Ser-340 has little effect on it. Post-translationally, acetylated by p300/CBP, acetylation increases stability. Deacetylated by HDAC1. As to expression, expressed in lung, brain and superior cervical ganglia. High levels are seen in the adrenal tissue.

It is found in the nucleus. The protein resides in the cytoplasm. Its subcellular location is the cytosol. The protein localises to the mitochondrion. Functionally, orphan nuclear receptor. Binds the NGFI-B response element (NBRE) 5'-AAAGGTCA-3'. Binds 9-cis-retinoic acid outside of its ligand-binding (NR LBD) domain. Participates in energy homeostasis by sequestrating the kinase STK11 in the nucleus, thereby attenuating cytoplasmic AMPK activation. Regulates the inflammatory response in macrophages by regulating metabolic adaptations during inflammation, including repressing the transcription of genes involved in the citric acid cycle (TCA). Inhibits NF-kappa-B signaling by binding to low-affinity NF-kappa-B binding sites, such as at the IL2 promoter. May act concomitantly with NR4A2 in regulating the expression of delayed-early genes during liver regeneration. Plays a role in the vascular response to injury. In terms of biological role, in the cytosol, upon its detection of both bacterial lipopolysaccharide (LPS) and NBRE-containing mitochondrial DNA released by GSDMD pores during pyroptosis, it promotes non-canonical NLRP3 inflammasome activation by stimulating association of NLRP3 and NEK7. This chain is Nuclear receptor subfamily 4 group A member 1 (Nr4a1), found in Rattus norvegicus (Rat).